Consider the following 319-residue polypeptide: Ribonuclease Z (319 aa).

Positions 62, 64, 66, 67, 139, 210, and 268 each coordinate Zn(2+). Catalysis depends on D66, which acts as the Proton acceptor.

This sequence belongs to the RNase Z family. In terms of assembly, homodimer. Zn(2+) is required as a cofactor.

It catalyses the reaction Endonucleolytic cleavage of RNA, removing extra 3' nucleotides from tRNA precursor, generating 3' termini of tRNAs. A 3'-hydroxy group is left at the tRNA terminus and a 5'-phosphoryl group is left at the trailer molecule.. Its function is as follows. Zinc phosphodiesterase, which displays some tRNA 3'-processing endonuclease activity. Probably involved in tRNA maturation, by removing a 3'-trailer from precursor tRNA. In Nostoc punctiforme (strain ATCC 29133 / PCC 73102), this protein is Ribonuclease Z.